Reading from the N-terminus, the 131-residue chain is MSMSDPIADMLTRIRNAQQVDKTTVNMPSSKLKVAIATVLKDEGYIDSFEVKGSQAKPELEITLKYYAGRPVIERIERVSRPGLRIYKGRSNIPQVMNGLGVAIVSTSRGVMTDRKARANGVGGEVLCYVA.

It belongs to the universal ribosomal protein uS8 family. As to quaternary structure, part of the 30S ribosomal subunit. Contacts proteins S5 and S12.

In terms of biological role, one of the primary rRNA binding proteins, it binds directly to 16S rRNA central domain where it helps coordinate assembly of the platform of the 30S subunit. The polypeptide is Small ribosomal subunit protein uS8 (Bordetella avium (strain 197N)).